A 502-amino-acid chain; its full sequence is CBL-interacting protein kinase 11 (502 aa).

The 256-residue stretch at 12–267 folds into the Protein kinase domain; it reads YEVGKQLGQG…IPRIKRSTWY (256 aa). ATP is bound by residues 18–26 and K41; that span reads LGQGTFAKV. The Proton acceptor role is filled by D135. The tract at residues 153–182 is activation loop; that stretch reads DFGLSALAESKRQDGLLHTTCGTPAYVAPE. Residues 297–333 form the NAF domain; the sequence is AECSTSEENQGSLSLPNLNAFDIISLSTGFNLSGFFE. Residues 339-367 form a PPI region; sequence QEERFTTRQPVTTVLGKLKELAKRLKLKV. The tract at residues 447-502 is disordered; it reads LQGEQQQSPLPPELPQDQLQPSLPQQEKQDMPEPPLLPQVPQEEVQTSIPAEQTKN. Residues 461 to 472 are compositionally biased toward low complexity; sequence PQDQLQPSLPQQ. A compositionally biased stretch (polar residues) spans 493 to 502; that stretch reads TSIPAEQTKN.

The protein belongs to the protein kinase superfamily. CAMK Ser/Thr protein kinase family. SNF1 subfamily. Requires Mn(2+) as cofactor.

It catalyses the reaction L-seryl-[protein] + ATP = O-phospho-L-seryl-[protein] + ADP + H(+). It carries out the reaction L-threonyl-[protein] + ATP = O-phospho-L-threonyl-[protein] + ADP + H(+). Its function is as follows. CIPK serine-threonine protein kinases interact with CBL proteins. Binding of a CBL protein to the regulatory NAF domain of CIPK protein lead to the activation of the kinase in a calcium-dependent manner. This is CBL-interacting protein kinase 11 (CIPK11) from Oryza sativa subsp. japonica (Rice).